We begin with the raw amino-acid sequence, 129 residues long: Small ribosomal subunit protein uS11 (129 aa).

It belongs to the universal ribosomal protein uS11 family. In terms of assembly, part of the 30S ribosomal subunit. Interacts with proteins S7 and S18. Binds to IF-3.

In terms of biological role, located on the platform of the 30S subunit, it bridges several disparate RNA helices of the 16S rRNA. Forms part of the Shine-Dalgarno cleft in the 70S ribosome. This chain is Small ribosomal subunit protein uS11, found in Caulobacter sp. (strain K31).